Consider the following 394-residue polypeptide: Junctional adhesion molecule-like (394 aa).

Positions 1–19 (MFCPLKLILLPVLLDYSLG) are cleaved as a signal peptide. Ig-like V-type domains follow at residues 20-132 (LNDL…KAVV) and 137-250 (PEEP…IVLH). At 20-275 (LNDLNVSPPE…RPLVLGGNQL (256 aa)) the chain is on the extracellular side. 2 cysteine pairs are disulfide-bonded: Cys-42–Cys-116 and Cys-155–Cys-234. N-linked (GlcNAc...) asparagine glycosylation is found at Asn-76 and Asn-231. Residues 276-296 (VIIVGIVCATILLLPVLILIV) form a helical membrane-spanning segment. Over 297–394 (KKTCGNKSSV…GGMPKTQQAF (98 aa)) the chain is Cytoplasmic. Residues 369–394 (PSLRSDRNNSLEKKSGGGMPKTQQAF) form a disordered region. The span at 372-383 (RSDRNNSLEKKS) shows a compositional bias: basic and acidic residues.

Belongs to the immunoglobulin superfamily. Homodimer; active form in leukocyte-endothelial cell adhesion. Interacts (homodimeric form) with CXADR. Interacts (via cytoplasmic domain) with the PI3 kinase; upon CXADR-binding. Interacts with ITGA4 and ITGB1; integrin alpha-4/beta-1 may regulate leukocyte to endothelial cells adhesion by controlling JAML homodimerization. As to expression, expression is restricted to the hematopoietic tissues with the exception of liver. Expressed in fetal liver, spleen and thymus. Preferentially expressed by mature leukocytes (at protein level).

It localises to the cell membrane. The protein localises to the cell junction. Its function is as follows. Transmembrane protein of the plasma membrane of leukocytes that control their migration and activation through interaction with CXADR, a plasma membrane receptor found on adjacent epithelial and endothelial cells. The interaction between both receptors mediates the activation of gamma-delta T-cells, a subpopulation of T-cells residing in epithelia and involved in tissue homeostasis and repair. Upon epithelial CXADR-binding, JAML induces downstream cell signaling events in gamma-delta T-cells through PI3-kinase and MAP kinases. It results in proliferation and production of cytokines and growth factors by T-cells that in turn stimulate epithelial tissues repair. It also controls the transmigration of leukocytes within epithelial and endothelial tissues through adhesive interactions with epithelial and endothelial CXADR. This Homo sapiens (Human) protein is Junctional adhesion molecule-like.